The following is an 86-amino-acid chain: Polcalcin Nic t 2 (86 aa).

2 consecutive EF-hand domains span residues 8 to 42 and 43 to 78; these read QDIA…TLGS and VTPE…NRGL. Asp-21, Asn-23, Asp-25, Gln-27, Glu-32, Asp-56, Asn-58, Asp-60, and Glu-67 together coordinate Ca(2+).

In Nicotiana tabacum (Common tobacco), this protein is Polcalcin Nic t 2 (Nict2).